Reading from the N-terminus, the 114-residue chain is Probable 4-amino-4-deoxy-L-arabinose-phosphoundecaprenol flippase subunit ArnE (114 aa).

3 helical membrane-spanning segments follow: residues 41 to 61, 64 to 84, and 94 to 114; these read PWLI…IYLL, LPLS…LIGS, and YHNW…GGLL. The region spanning 53–112 is the EamA domain; it reads GMLLWIYLLQRLPLSMAYPMLSINLVLVLIGSRLFFHEQISYHNWLGAGAIIIGALLLGG.

This sequence belongs to the ArnE family. Heterodimer of ArnE and ArnF.

It localises to the cell inner membrane. It participates in bacterial outer membrane biogenesis; lipopolysaccharide biosynthesis. Functionally, translocates 4-amino-4-deoxy-L-arabinose-phosphoundecaprenol (alpha-L-Ara4N-phosphoundecaprenol) from the cytoplasmic to the periplasmic side of the inner membrane. The sequence is that of Probable 4-amino-4-deoxy-L-arabinose-phosphoundecaprenol flippase subunit ArnE from Aeromonas salmonicida (strain A449).